A 633-amino-acid polypeptide reads, in one-letter code: Probable extracellular metalloproteinase 5 (633 aa).

The N-terminal stretch at 1-20 (MHGLLLAAAGLLSLPLHVLA) is a signal peptide. Positions 21–244 (HPQPSTNLAG…VHNVVDYVSH (224 aa)) are excised as a propeptide. An N-linked (GlcNAc...) asparagine glycan is attached at Asn285. His428 serves as a coordination point for Zn(2+). Glu429 is a catalytic residue. His432 contacts Zn(2+). Residues Asn592 and Asn621 are each glycosylated (N-linked (GlcNAc...) asparagine).

It belongs to the peptidase M36 family. Zn(2+) is required as a cofactor.

The protein resides in the secreted. In terms of biological role, secreted metalloproteinase probably acting as a virulence factor. This chain is Probable extracellular metalloproteinase 5 (MEP5), found in Arthroderma benhamiae (strain ATCC MYA-4681 / CBS 112371) (Trichophyton mentagrophytes).